The chain runs to 355 residues: Sesquiterpene synthase MAJ_08936 (355 aa).

Mg(2+) contacts are provided by Asp91 and Asp96. The short motif at 91-96 (DDLFVD) is the DDXXXD motif element. A substrate-binding site is contributed by Arg184. Positions 230, 234, and 238 each coordinate Mg(2+).

This sequence belongs to the terpene synthase family. Mg(2+) serves as cofactor.

It catalyses the reaction (2E,6E)-farnesyl diphosphate + H2O = (+)-corvol ether B + diphosphate. The catalysed reaction is (2E,6E)-farnesyl diphosphate + H2O = (+)-corvol ether A + diphosphate. Terpene synthase that catalyzes the conversion of (2E,6E)-farnesyl diphosphate (FPP) into sesquiterpenes which are important for fungi-environment interactions. Produces a mixture consisting of 8 sesquiterpenes including corvol ethers A and B, as well as traces of epizonarene, gamma-cadinene, delta-cadinene, alpha-cadinene, alpha-cadinol, and an unidentified sesquiterpene. The major product is corvol ether A. In Metarhizium majus (strain ARSEF 297), this protein is Sesquiterpene synthase MAJ_08936.